The following is a 37-amino-acid chain: Mu-agatoxin-Aa1f (37 aa).

Intrachain disulfides connect cysteine 2/cysteine 18, cysteine 9/cysteine 23, cysteine 17/cysteine 33, and cysteine 25/cysteine 31. Asparagine 37 carries the post-translational modification Asparagine amide.

Belongs to the neurotoxin 07 (Beta/delta-agtx) family. 03 (aga-4) subfamily. Aga sub-subfamily. As to expression, expressed by the venom gland.

The protein localises to the secreted. In terms of biological role, insecticidal neurotoxin that induces an irreversible spastic paralysis when injected into insects. Modifies presynaptic voltage-gated sodium channels (Nav), causing them to open at the normal resting potential of the nerve. This leads to spontaneous release of neurotransmitter and repetitive action potentials in motor neurons. This chain is Mu-agatoxin-Aa1f, found in Agelenopsis aperta (North American funnel-web spider).